A 193-amino-acid chain; its full sequence is Calcium-binding protein E63-1 (193 aa).

EF-hand domains lie at 35 to 70 (VEIK…LGIN), 71 to 106 (VSDE…IQAL), 127 to 162 (DVTE…IGEP), and 163 to 193 (LNEQ…RLLL). Aspartate 48, asparagine 50, aspartate 52, arginine 54, and glutamate 59 together coordinate Ca(2+). Residues aspartate 140, aspartate 142, asparagine 144, glutamate 151, aspartate 176, aspartate 178, aspartate 180, arginine 182, and glutamate 187 each contribute to the Ca(2+) site.

The protein is Calcium-binding protein E63-1 (Eip63F-1) of Drosophila melanogaster (Fruit fly).